The chain runs to 801 residues: Protein 4.1 (801 aa).

The disordered stretch occupies residues 1 to 187; the sequence is MTTEKGLLAE…GESKASHKVV (187 aa). Over residues 45 to 58 the composition is skewed to low complexity; that stretch reads EQSQESPSTTSPST. A compositionally biased stretch (basic and acidic residues) spans 88 to 107; the sequence is SDEKEVELLGEKGQDQKDVD. The segment covering 108–117 has biased composition (acidic residues); that stretch reads EGLGEQLEDD. Polar residues predominate over residues 141 to 151; that stretch reads SLSSAETQPAQ. The span at 154–166 shows a compositional bias: acidic residues; it reads QKEDQDPEADCED. Positions 167 to 182 are enriched in basic and acidic residues; sequence VEGKEPIKKPEGESKA. The 282-residue stretch at 193-474 folds into the FERM domain; sequence MRCKVTLLDD…EHHTFFRLTS (282 aa). The hydrophilic stretch occupies residues 477-587; the sequence is SIPKHRFLSL…GMPNQRESPK (111 aa). The tract at residues 516-613 is disordered; that stretch reads RTGSKRASRS…DKVKDLEKTQ (98 aa). Residues 563-577 are compositionally biased toward basic and acidic residues; that stretch reads RVEEMPKKTEEKPKE. The interval 588–651 is spectrin--actin-binding; it reads DVKATQQDSP…WDKRLSTHSP (64 aa). Positions 591–601 are enriched in polar residues; sequence ATQQDSPSPTV. The segment covering 604 to 613 has biased composition (basic and acidic residues); sequence DKVKDLEKTQ. Residues 653 to 801 are C-terminal (CTD); that stretch reads RTLSFNGQVQ…GVVHQETEIA (149 aa).

In terms of assembly, binds with a high affinity to glycophorin and with lower affinity to band III protein. Associates with the nuclear mitotic apparatus. Binds calmodulin. Phosphorylated at multiple sites by different protein kinases and each phosphorylation event selectively modulates the protein's functions. Found exclusively in photoreceptors following the terminal mitosis of retinal neurons. When retinal synaptogenesis is complete, protein 4.1 is also expressed in the inner retina. In adult amphibian retinas, protein 4.1 is detected in photoreceptors, bipolar cells, and ganglion cell axons.

It localises to the nucleus. The protein resides in the cytoplasm. Its subcellular location is the cytoskeleton. The protein localises to the cell cortex. Protein 4.1 is a major structural element of the erythrocyte membrane skeleton. It plays a key role in regulating membrane physical properties of mechanical stability and deformability by stabilizing spectrin-actin interaction. May be required for dynein-dynactin complex and NUMA1 recruitment at the mitotic cell cortex during anaphase. The sequence is that of Protein 4.1 from Xenopus laevis (African clawed frog).